Here is a 2543-residue protein sequence, read N- to C-terminus: Highly reducing polyketide synthase GPY1 (2543 aa).

In terms of domain architecture, Ketosynthase family 3 (KS3) spans Arg-9–Phe-435. Catalysis depends on for beta-ketoacyl synthase activity residues Cys-182, His-318, and His-358. The segment at Thr-574 to Ala-881 is malonyl-CoA:ACP transacylase (MAT) domain. The N-terminal hotdog fold stretch occupies residues His-953–Lys-1089. The dehydratase (DH) domain stretch occupies residues His-953 to Asp-1253. The 304-residue stretch at His-953–Thr-1256 folds into the PKS/mFAS DH domain. His-985 functions as the Proton acceptor; for dehydratase activity in the catalytic mechanism. A C-terminal hotdog fold region spans residues Met-1103–Thr-1256. Asp-1169 acts as the Proton donor; for dehydratase activity in catalysis. Positions Asn-1399–Ala-1587 are methyltransferase (CMet) domain. The enoyl reductase (ER) domain stretch occupies residues Gly-1830–Val-2136. The tract at residues Thr-2161 to Glu-2335 is ketoreductase (KR) domain. Residues Ala-2464 to Ile-2541 enclose the Carrier domain. Ser-2501 is subject to O-(pantetheine 4'-phosphoryl)serine.

Highly reducing polyketide synthase; part of the gene cluster that mediates the biosynthesis of gibepyrone A, a 2H-pyran-2-one metabolite exhibiting a moderate antimicrobial activity against Gram-positive bacteria and yeasts. The highly reducing polyketide synthase GPY1 is sufficient to produce gibepyrone A. GPY1 uses an acetyl-CoA starter unit, three malonyl-CoA extender units, and two SAM-dependent methylations to establish the gibepyrone A carbon backbone, followed by product release upon intramolecular cyclization. The gibepyrone A derivatives gibepyrones B and D are produced by cluster-independent P450 monooxygenases, probably to protect the fungus from the toxic product. In contrast, the formation of gibepyrones E and F from gibepyrone A is a spontaneous process and independent of enzymatic activity. The polypeptide is Highly reducing polyketide synthase GPY1 (Gibberella fujikuroi (strain CBS 195.34 / IMI 58289 / NRRL A-6831) (Bakanae and foot rot disease fungus)).